The following is a 243-amino-acid chain: Protein-L-isoaspartate O-methyltransferase 2 (243 aa).

The interval 21 to 42 (DACADRGHPSAERSTPETERRR) is disordered. The span at 23 to 42 (CADRGHPSAERSTPETERRR) shows a compositional bias: basic and acidic residues. S94 is a catalytic residue.

It belongs to the methyltransferase superfamily. L-isoaspartyl/D-aspartyl protein methyltransferase family.

The protein resides in the cytoplasm. The enzyme catalyses [protein]-L-isoaspartate + S-adenosyl-L-methionine = [protein]-L-isoaspartate alpha-methyl ester + S-adenosyl-L-homocysteine. Its function is as follows. Catalyzes the methyl esterification of L-isoaspartyl residues in peptides and proteins that result from spontaneous decomposition of normal L-aspartyl and L-asparaginyl residues. It plays a role in the repair and/or degradation of damaged proteins. This Anaeromyxobacter sp. (strain Fw109-5) protein is Protein-L-isoaspartate O-methyltransferase 2.